A 200-amino-acid polypeptide reads, in one-letter code: Small ribosomal subunit protein uS4 (200 aa).

The S4 RNA-binding domain maps to 92–155 (SRLDAVVYSL…QKLNIIVESV (64 aa)).

It belongs to the universal ribosomal protein uS4 family. As to quaternary structure, part of the 30S ribosomal subunit. Contacts protein S5. The interaction surface between S4 and S5 is involved in control of translational fidelity.

Functionally, one of the primary rRNA binding proteins, it binds directly to 16S rRNA where it nucleates assembly of the body of the 30S subunit. With S5 and S12 plays an important role in translational accuracy. The protein is Small ribosomal subunit protein uS4 of Staphylococcus aureus (strain JH9).